The sequence spans 1755 residues: Transposon Ty1-DR5 Gag-Pol polyprotein (1755 aa).

Composition is skewed to polar residues over residues 1–10 (MESQQLSNYP), 48–60 (TKAN…TPAS), and 127–152 (QSQF…GNTF). 3 disordered regions span residues 1–93 (MESQ…MMTQ), 126–173 (PQSQ…RPPP), and 352–421 (GSRN…SKST). Low complexity predominate over residues 153-165 (TDSSSADSDMTST). Residues 299 to 401 (NNGIHINNKV…NSKSKTARAH (103 aa)) form an RNA-binding region. A compositionally biased stretch (low complexity) spans 402–418 (NVSTSNNSPSTDNDSIS). The For protease activity; shared with dimeric partner role is filled by aspartate 461. The segment at 583–640 (NVHTSESTRKYPYPFIHRMLAHANAQTIRYSLKNNTITYFNESDVDWSSAIDYQCPDC) is integrase-type zinc finger-like. The 176-residue stretch at 660–835 (NSYEPFQYLH…AGLDISTLLP (176 aa)) folds into the Integrase catalytic domain. Positions 671 and 736 each coordinate Mg(2+). Disordered stretches follow at residues 956-1087 (SKAV…ETEK), 1092-1111 (RSPS…NIVP), and 1130-1187 (DLPL…DNET). A compositionally biased stretch (low complexity) spans 960–969 (SPTDSTPPST). Residues 1005–1015 (STPQISNIEST) show a composition bias toward polar residues. The span at 1038-1053 (ESSHASKSKDFRHSDS) shows a compositional bias: basic and acidic residues. Polar residues-rich tracts occupy residues 1054 to 1082 (YSEN…QISD) and 1101 to 1111 (PENNSSHNIVP). Positions 1178-1212 (KKRSLEDNETEIKVSRDTWNTKNMRSLEPPRSKKR) match the Bipartite nuclear localization signal motif. The Reverse transcriptase Ty1/copia-type domain occupies 1338–1476 (NNYYITQLDI…DILGLEIKYQ (139 aa)). Aspartate 1346, aspartate 1427, aspartate 1428, aspartate 1610, glutamate 1652, and aspartate 1685 together coordinate Mg(2+). One can recognise an RNase H Ty1/copia-type domain in the interval 1610–1752 (DASYGNQPYY…IKTFKLLTNK (143 aa)).

The capsid protein forms a homotrimer, from which the VLPs are assembled. The protease is a homodimer, whose active site consists of two apposed aspartic acid residues. Post-translationally, initially, virus-like particles (VLPs) are composed of the structural unprocessed proteins Gag and Gag-Pol, and also contain the host initiator methionine tRNA (tRNA(i)-Met) which serves as a primer for minus-strand DNA synthesis, and a dimer of genomic Ty RNA. Processing of the polyproteins occurs within the particle and proceeds by an ordered pathway, called maturation. First, the protease (PR) is released by autocatalytic cleavage of the Gag-Pol polyprotein yielding capsid protein p45 and a Pol-p154 precursor protein. This cleavage is a prerequisite for subsequent processing of Pol-p154 at the remaining sites to release the mature structural and catalytic proteins. Maturation takes place prior to the RT reaction and is required to produce transposition-competent VLPs.

It localises to the cytoplasm. The protein resides in the nucleus. It catalyses the reaction DNA(n) + a 2'-deoxyribonucleoside 5'-triphosphate = DNA(n+1) + diphosphate. It carries out the reaction Endonucleolytic cleavage to 5'-phosphomonoester.. In terms of biological role, capsid protein (CA) is the structural component of the virus-like particle (VLP), forming the shell that encapsulates the retrotransposons dimeric RNA genome. The particles are assembled from trimer-clustered units and there are holes in the capsid shells that allow for the diffusion of macromolecules. CA also has nucleocapsid-like chaperone activity, promoting primer tRNA(i)-Met annealing to the multipartite primer-binding site (PBS), dimerization of Ty1 RNA and initiation of reverse transcription. Its function is as follows. The aspartyl protease (PR) mediates the proteolytic cleavages of the Gag and Gag-Pol polyproteins after assembly of the VLP. Functionally, reverse transcriptase/ribonuclease H (RT) is a multifunctional enzyme that catalyzes the conversion of the retro-elements RNA genome into dsDNA within the VLP. The enzyme displays a DNA polymerase activity that can copy either DNA or RNA templates, and a ribonuclease H (RNase H) activity that cleaves the RNA strand of RNA-DNA heteroduplexes during plus-strand synthesis and hydrolyzes RNA primers. The conversion leads to a linear dsDNA copy of the retrotransposon that includes long terminal repeats (LTRs) at both ends. Integrase (IN) targets the VLP to the nucleus, where a subparticle preintegration complex (PIC) containing at least integrase and the newly synthesized dsDNA copy of the retrotransposon must transit the nuclear membrane. Once in the nucleus, integrase performs the integration of the dsDNA into the host genome. The sequence is that of Transposon Ty1-DR5 Gag-Pol polyprotein (TY1B-DR5) from Saccharomyces cerevisiae (strain ATCC 204508 / S288c) (Baker's yeast).